A 191-amino-acid chain; its full sequence is Rubrerythrin (191 aa).

A Ferritin-like diiron domain is found at 1 to 146 (MKSLKGSRTE…DFARNIKEGR (146 aa)). Positions 20, 53, 94, 97, 128, 131, 158, 161, 174, and 177 each coordinate Fe(3+). The region spanning 153–191 (ATKWRCRNCGYVHEGTGAPELCPACAHPKAHFELLGINW) is the Rubredoxin-like domain.

In terms of assembly, homodimer. Possesses two rubredoxin-like centers and two non-sulfur oxo-bridged di-iron centers per dimer. The cofactor is Fe(3+).

Its subcellular location is the cytoplasm. May provide oxidative stress protection via catalytic reduction of intracellular hydrogen peroxide. This Nitratidesulfovibrio vulgaris (strain ATCC 29579 / DSM 644 / CCUG 34227 / NCIMB 8303 / VKM B-1760 / Hildenborough) (Desulfovibrio vulgaris) protein is Rubrerythrin (rbr).